The sequence spans 447 residues: Argininosuccinate lyase (447 aa).

Belongs to the lyase 1 family. Argininosuccinate lyase subfamily.

The protein localises to the cytoplasm. It catalyses the reaction 2-(N(omega)-L-arginino)succinate = fumarate + L-arginine. It participates in amino-acid biosynthesis; L-arginine biosynthesis; L-arginine from L-ornithine and carbamoyl phosphate: step 3/3. This chain is Argininosuccinate lyase, found in Bacteroides fragilis (strain YCH46).